The following is a 439-amino-acid chain: Serine hydroxymethyltransferase (439 aa).

126–128 (AHV) contacts (6S)-5,6,7,8-tetrahydrofolate. Lysine 232 bears the N6-(pyridoxal phosphate)lysine mark.

Belongs to the SHMT family. In terms of assembly, homodimer. Requires pyridoxal 5'-phosphate as cofactor.

The protein resides in the cytoplasm. Its pathway is amino-acid biosynthesis; glycine biosynthesis; glycine from L-serine: step 1/1. Functionally, catalyzes the reversible interconversion of serine and glycine with a modified folate serving as the one-carbon carrier. Also exhibits a pteridine-independent aldolase activity toward beta-hydroxyamino acids, producing glycine and aldehydes, via a retro-aldol mechanism. The chain is Serine hydroxymethyltransferase from Staphylothermus marinus (strain ATCC 43588 / DSM 3639 / JCM 9404 / F1).